The primary structure comprises 238 residues: Probable transcriptional regulatory protein VV2_1184 (238 aa).

This sequence belongs to the TACO1 family.

It localises to the cytoplasm. The chain is Probable transcriptional regulatory protein VV2_1184 from Vibrio vulnificus (strain CMCP6).